Reading from the N-terminus, the 431-residue chain is Large envelope protein (431 aa).

The N-myristoyl glycine; by host moiety is linked to residue Gly2. The interval Gly2–Leu148 is pre-S1. The interval Gly2–Ser207 is pre-S. Over Gly2–Ser214 the chain is Virion surface; in external conformation. The Intravirion; in internal conformation segment spans residues Gly2–Arg286. Asn3 is a glycosylation site (N-linked (GlcNAc...) asparagine). Residues Ile115–His147 form a disordered region. Residues Thr149 to Ser207 form a pre-S2 region. A helical membrane pass occupies residues Leu215–Ile235. Topologically, residues Ala236–Arg286 are intravirion; in external conformation. Residues Phe287 to Trp307 form a helical membrane-spanning segment. Residues Lys308–Asn379 lie on the Virion surface side of the membrane. N-linked (GlcNAc...) asparagine; by host glycosylation occurs at Asn351. Residues Leu380–Ile400 traverse the membrane as a helical segment. Over Trp401 to Trp406 the chain is Intravirion. A helical membrane pass occupies residues Gly407–Val429. Over Tyr430–Ile431 the chain is Virion surface.

The protein belongs to the orthohepadnavirus major surface antigen family. As to quaternary structure, in its internal form (Li-HBsAg), interacts with the capsid protein and with the isoform S. Interacts with host chaperone CANX. In terms of assembly, associates with host chaperone CANX through its pre-S2 N glycan; this association may be essential for isoform M proper secretion. Interacts with isoform L. Interacts with the antigens of satellite virus HDV (HDVAgs); this interaction is required for encapsidation of HDV genomic RNA. In terms of processing, isoform M is N-terminally acetylated by host at a ratio of 90%, and N-glycosylated by host at the pre-S2 region. Post-translationally, myristoylated.

The protein localises to the virion membrane. The large envelope protein exists in two topological conformations, one which is termed 'external' or Le-HBsAg and the other 'internal' or Li-HBsAg. In its external conformation the protein attaches the virus to cell receptors and thereby initiating infection. This interaction determines the species specificity and liver tropism. This attachment induces virion internalization predominantly through caveolin-mediated endocytosis. The large envelope protein also assures fusion between virion membrane and endosomal membrane. In its internal conformation the protein plays a role in virion morphogenesis and mediates the contact with the nucleocapsid like a matrix protein. Its function is as follows. The middle envelope protein plays an important role in the budding of the virion. It is involved in the induction of budding in a nucleocapsid independent way. In this process the majority of envelope proteins bud to form subviral lipoprotein particles of 22 nm of diameter that do not contain a nucleocapsid. This chain is Large envelope protein, found in Woodchuck hepatitis B virus (isolate 7) (WHV).